The primary structure comprises 165 residues: uncharacterized protein (165 aa).

This is an uncharacterized protein from Homo sapiens (Human).